A 233-amino-acid polypeptide reads, in one-letter code: Charged multivesicular body protein 4c (233 aa).

Disordered stretches follow at residues 1–24 (MSKLGKFFKGGGSSKSRAAPSPQE) and 173–233 (QEEL…AWAT). Residues 1–153 (MSKLGKFFKG…EISEAFSQRV (153 aa)) form an intramolecular interaction with C-terminus region. A coiled-coil region spans residues 125–183 (LNKIDDLMQEITEQQDIAQEISEAFSQRVGFGDDFDEDELMAELEELEQEELNKKMTNI). Residues 154-233 (GFGDDFDEDE…DIKQLAAWAT (80 aa)) are intramolecular interaction with N-terminus. Positions 204 to 216 (SSTARRSRAASSQ) are enriched in low complexity. Serine 210 bears the Phosphoserine; by AURKB mark.

The protein belongs to the SNF7 family. Probable core component of the endosomal sorting required for transport complex III (ESCRT-III). ESCRT-III components are thought to multimerize to form a flat lattice on the perimeter membrane of the endosome. Several assembly forms of ESCRT-III may exist that interact and act sequentially. Self-associates. Interacts with CHMP2A. Interacts with CHMP4A. Interacts with CHMP4B. Interacts with CHMP6. Interacts with VPS4A. Interacts with PDCD6IP; the interaction is direct. Phosphorylated at Ser-210 by AURKB during cytokinesis: together with ZFYVE19/ANCHR, phosphorylated CHMP4C retains abscission-competent VPS4 (VPS4A and/or VPS4B) at the midbody ring until abscission checkpoint signaling is terminated at late cytokinesis. Expressed in heart, spleen and kidney.

The protein resides in the cytoplasm. The protein localises to the cytosol. It is found in the late endosome membrane. Its subcellular location is the midbody. It localises to the midbody ring. Its function is as follows. Probable core component of the endosomal sorting required for transport complex III (ESCRT-III) which is involved in multivesicular bodies (MVBs) formation and sorting of endosomal cargo proteins into MVBs. MVBs contain intraluminal vesicles (ILVs) that are generated by invagination and scission from the limiting membrane of the endosome and mostly are delivered to lysosomes enabling degradation of membrane proteins, such as stimulated growth factor receptors, lysosomal enzymes and lipids. The MVB pathway appears to require the sequential function of ESCRT-O, -I,-II and -III complexes. ESCRT-III proteins mostly dissociate from the invaginating membrane before the ILV is released. The ESCRT machinery also functions in topologically equivalent membrane fission events, such as the terminal stages of cytokinesis and the budding of enveloped viruses (HIV-1 and other lentiviruses). Key component of the cytokinesis checkpoint, a process required to delay abscission to prevent both premature resolution of intercellular chromosome bridges and accumulation of DNA damage: upon phosphorylation by AURKB, together with ZFYVE19/ANCHR, retains abscission-competent VPS4 (VPS4A and/or VPS4B) at the midbody ring until abscission checkpoint signaling is terminated at late cytokinesis. Deactivation of AURKB results in dephosphorylation of CHMP4C followed by its dissociation from ANCHR and VPS4 and subsequent abscission. ESCRT-III proteins are believed to mediate the necessary vesicle extrusion and/or membrane fission activities, possibly in conjunction with the AAA ATPase VPS4. Involved in HIV-1 p6- and p9-dependent virus release. CHMP4A/B/C are required for the exosomal release of SDCBP, CD63 and syndecan. The chain is Charged multivesicular body protein 4c (CHMP4C) from Homo sapiens (Human).